Here is a 98-residue protein sequence, read N- to C-terminus: Aspartyl/glutamyl-tRNA(Asn/Gln) amidotransferase subunit C (98 aa).

The protein belongs to the GatC family. In terms of assembly, heterotrimer of A, B and C subunits.

The enzyme catalyses L-glutamyl-tRNA(Gln) + L-glutamine + ATP + H2O = L-glutaminyl-tRNA(Gln) + L-glutamate + ADP + phosphate + H(+). It carries out the reaction L-aspartyl-tRNA(Asn) + L-glutamine + ATP + H2O = L-asparaginyl-tRNA(Asn) + L-glutamate + ADP + phosphate + 2 H(+). In terms of biological role, allows the formation of correctly charged Asn-tRNA(Asn) or Gln-tRNA(Gln) through the transamidation of misacylated Asp-tRNA(Asn) or Glu-tRNA(Gln) in organisms which lack either or both of asparaginyl-tRNA or glutaminyl-tRNA synthetases. The reaction takes place in the presence of glutamine and ATP through an activated phospho-Asp-tRNA(Asn) or phospho-Glu-tRNA(Gln). The protein is Aspartyl/glutamyl-tRNA(Asn/Gln) amidotransferase subunit C of Beutenbergia cavernae (strain ATCC BAA-8 / DSM 12333 / CCUG 43141 / JCM 11478 / NBRC 16432 / NCIMB 13614 / HKI 0122).